We begin with the raw amino-acid sequence, 421 residues long: Gamma-glutamyl phosphate reductase (421 aa).

The protein belongs to the gamma-glutamyl phosphate reductase family.

It localises to the cytoplasm. It catalyses the reaction L-glutamate 5-semialdehyde + phosphate + NADP(+) = L-glutamyl 5-phosphate + NADPH + H(+). It participates in amino-acid biosynthesis; L-proline biosynthesis; L-glutamate 5-semialdehyde from L-glutamate: step 2/2. Functionally, catalyzes the NADPH-dependent reduction of L-glutamate 5-phosphate into L-glutamate 5-semialdehyde and phosphate. The product spontaneously undergoes cyclization to form 1-pyrroline-5-carboxylate. The protein is Gamma-glutamyl phosphate reductase of Acinetobacter baylyi (strain ATCC 33305 / BD413 / ADP1).